The sequence spans 458 residues: Secretion-regulating guanine nucleotide exchange factor (458 aa).

7 RCC1 repeats span residues 15–67, 68–119, 120–171, 172–230, 231–283, 284–351, and 352–402; these read AALF…VTDG, GDLF…LTEN, GQVL…ATAS, GIVF…LTDA, GEVY…QTET, GKMF…IIGG, and VCYS…LCQL. Residues 420 to 458 are disordered; it reads DAIEDTESQKAMDKERNWKERQSETSTQSQSDWSRNGGL. Basic and acidic residues predominate over residues 426-442; the sequence is ESQKAMDKERNWKERQS. Serine 427 is modified (phosphoserine).

As to quaternary structure, interacts with SEC5. The interaction occurs only in the presence of magnesium or manganese and is stimulated by dCTP or GTP.

It localises to the cytoplasm. The protein localises to the nucleus. Its function is as follows. Probable guanine nucleotide exchange factor (GEF), which may be involved in the secretion process. In Homo sapiens (Human), this protein is Secretion-regulating guanine nucleotide exchange factor (SERGEF).